Reading from the N-terminus, the 484-residue chain is MNEDMMTEAERASIAADGTDSLLGERGKGVFHIHTLGCQMNVHDSERIAGVLEANGYVPATEDQINDNDLDLLVLNTCAVRENAAERMYGTIGRFNRVKLVRPNLQIAVGGCMAQLDRKKIADTAPWVSAVFGTKNIEDLPKLLDQNRATGKAQVQVTEQLRQFPSQLPAARASRISSWVAISVGCNNTCTFCIVPTTRGKEKDRRPGDILDEIRQCVAGGAKEVTLLGQNVNSFGYGIGDRYAFSKLLRACGTIDGLERVRFTSPHPAAFTDDVIAAMAETPNIMHQLHFPLQSGSDRILRAMRRSYRSAKFLDILGRIREAMPDAQISTDIIVGFPGETEEDFQQTMDVVRQARFSSAFTFIYSPRPGTPAAAMEQIPRDVVQDRFDRLVALQEQITEENLATFEGRDVEVMITGKLGKKDTDTHRVTGREKTGVLVHIGVPEGEPVPEIGDFVTVTVTHAGRHNLLADPDVAAGQTYSVRH.

Positions 29–149 constitute an MTTase N-terminal domain; sequence GVFHIHTLGC…LPKLLDQNRA (121 aa). Residues C38, C78, C112, C186, C190, and C193 each coordinate [4Fe-4S] cluster. A Radical SAM core domain is found at 172–401; the sequence is RASRISSWVA…VALQEQITEE (230 aa). The region spanning 404-474 is the TRAM domain; that stretch reads ATFEGRDVEV…RHNLLADPDV (71 aa).

This sequence belongs to the methylthiotransferase family. MiaB subfamily. Monomer. Requires [4Fe-4S] cluster as cofactor.

Its subcellular location is the cytoplasm. It carries out the reaction N(6)-dimethylallyladenosine(37) in tRNA + (sulfur carrier)-SH + AH2 + 2 S-adenosyl-L-methionine = 2-methylsulfanyl-N(6)-dimethylallyladenosine(37) in tRNA + (sulfur carrier)-H + 5'-deoxyadenosine + L-methionine + A + S-adenosyl-L-homocysteine + 2 H(+). In terms of biological role, catalyzes the methylthiolation of N6-(dimethylallyl)adenosine (i(6)A), leading to the formation of 2-methylthio-N6-(dimethylallyl)adenosine (ms(2)i(6)A) at position 37 in tRNAs that read codons beginning with uridine. In Bifidobacterium longum subsp. infantis (strain ATCC 15697 / DSM 20088 / JCM 1222 / NCTC 11817 / S12), this protein is tRNA-2-methylthio-N(6)-dimethylallyladenosine synthase.